A 257-amino-acid chain; its full sequence is Snake venom serine proteinase 11 (257 aa).

The signal sequence occupies residues 1–18 (MVLIRVLANLLILQLSYA). Residues 19-24 (QKSSEL) constitute a propeptide that is removed on maturation. The region spanning 25 to 248 (VVGGDECNIN…YTEWIQSIIT (224 aa)) is the Peptidase S1 domain. Disulfide bonds link cysteine 31–cysteine 162, cysteine 49–cysteine 65, cysteine 97–cysteine 255, cysteine 141–cysteine 209, cysteine 173–cysteine 188, and cysteine 199–cysteine 224. Residues histidine 64 and aspartate 109 each act as charge relay system in the active site. A glycan (N-linked (GlcNAc...) asparagine) is linked at asparagine 120. Serine 203 acts as the Charge relay system in catalysis.

It belongs to the peptidase S1 family. Snake venom subfamily. As to quaternary structure, monomer. Expressed by the venom gland.

The protein resides in the secreted. Its function is as follows. Snake venom serine protease that may act in the hemostasis system of the prey. In Crotalus adamanteus (Eastern diamondback rattlesnake), this protein is Snake venom serine proteinase 11.